Here is a 475-residue protein sequence, read N- to C-terminus: Vitronectin (475 aa).

The signal sequence occupies residues 1-19; that stretch reads MAPLRPIFTLALLLWVVLA. Positions 20–63 constitute an SMB domain; sequence DQESCKDRCTEGFNANRKCQCDELCSYYQSCCADYAAECKPQVT. 7 disulfide bridges follow: C24–C28, C24–C40, C28–C58, C38–C40, C38–C51, C44–C50, and C51–C58. The Cell attachment site motif lies at 64–66; the sequence is RGD. T69 carries the post-translational modification Phosphothreonine. Sulfotyrosine is present on residues Y75, Y78, and Y80. N-linked (GlcNAc...) asparagine glycosylation is present at N87. The interval 87–123 is disordered; sequence NASVHAQPESPTVGQEPTLSPDLQTEGGAEPTHEVPL. The span at 95–109 shows a compositional bias: polar residues; that stretch reads ESPTVGQEPTLSPDL. Hemopexin repeat units lie at residues 158-202, 203-250, and 251-305; these read GKPF…VWGI, EGPI…FSGI, and PDNV…FEHF. N-linked (GlcNAc...) asparagine glycans are attached at residues N169 and N242. A sulfotyrosine mark is found at Y279 and Y282. A Phosphoserine modification is found at S312. The segment at 359–391 is disordered; that stretch reads LTPSPSAKKQKSRRRSRKRYRSRYGRGRSQNSR. The span at 366 to 384 shows a compositional bias: basic residues; that stretch reads KKQKSRRRSRKRYRSRYGR. A glycosaminoglycan binding region region spans residues 366–392; sequence KKQKSRRRSRKRYRSRYGRGRSQNSRR. The residue at position 394 (S394) is a Phosphoserine. The stretch at 419–469 is one Hemopexin 4 repeat; it reads TSWLKPATSEPIQSVYFFSGDKYYRVNLRTQRVDTVNPPYPRSIAQYWLGC.

In terms of assembly, interacts with SERPINE1/PAI1 and C1QBP. Monomer. Sulfated on tyrosine residues. Post-translationally, N- and O-glycosylated. In terms of processing, it has been suggested that the active SMB domain may be permitted considerable disulfide bond heterogeneity or variability, thus two alternate disulfide patterns based on 3D structures are described with 1 disulfide bond conserved in both. As to expression, plasma.

It is found in the secreted. Its subcellular location is the extracellular space. Functionally, vitronectin is a cell adhesion and spreading factor found in serum and tissues. Vitronectin interact with glycosaminoglycans and proteoglycans. Is recognized by certain members of the integrin family and serves as a cell-to-substrate adhesion molecule. Inhibitor of the membrane-damaging effect of the terminal cytolytic complement pathway. The protein is Vitronectin (VTN) of Oryctolagus cuniculus (Rabbit).